Consider the following 429-residue polypeptide: Adenylosuccinate synthetase (429 aa).

Residues 12-18 and 40-42 each bind GTP; these read GDEGKGK and GHT. Asp-13 functions as the Proton acceptor in the catalytic mechanism. Residues Asp-13 and Gly-40 each coordinate Mg(2+). IMP is bound by residues 13-16, 38-41, Thr-129, Arg-143, Gln-223, Thr-238, and Arg-302; these read DEGK and NAGH. His-41 functions as the Proton donor in the catalytic mechanism. 298–304 contributes to the substrate binding site; it reads VVTGRKR. GTP-binding positions include Arg-304, 330-332, and 412-414; these read KLD and STS.

Belongs to the adenylosuccinate synthetase family. In terms of assembly, homodimer. Mg(2+) serves as cofactor.

It localises to the cytoplasm. It carries out the reaction IMP + L-aspartate + GTP = N(6)-(1,2-dicarboxyethyl)-AMP + GDP + phosphate + 2 H(+). It participates in purine metabolism; AMP biosynthesis via de novo pathway; AMP from IMP: step 1/2. In terms of biological role, plays an important role in the de novo pathway of purine nucleotide biosynthesis. Catalyzes the first committed step in the biosynthesis of AMP from IMP. This chain is Adenylosuccinate synthetase, found in Maricaulis maris (strain MCS10) (Caulobacter maris).